The following is a 628-amino-acid chain: Somatic embryogenesis receptor kinase 2 (628 aa).

The signal sequence occupies residues 1–29 (MGRKKFEAFGFVCLISLLLLFNSLWLASS). Over 30-241 (NMEGDALHSL…PTPGGYSATG (212 aa)) the chain is Extracellular. The interval 45–85 (DPNNVLQSWDPTLVNPCTWFHVTCNNENSVIRVDLGNADLS) is PSKR1 binding. Residues 56 to 58 (TLV) are CLE44 binding. Cysteines 61 and 68 form a disulfide. 2 leucine-rich repeat receptor-like protein kinase binding regions span residues 62 to 81 (TWFHVTCNNENSVIRVDLGN) and 100 to 105 (YLELYS). Brassinolide is bound at residue 64-65 (FH). 4 LRR repeats span residues 95–119 (LKNLQYLELYSNNITGPVPSDLGNL), 121–143 (NLVSLDLYLNSFTGPIPDSLGKL), 144–167 (FKLRFLRLNNNSLTGPIPMSLTNI), and 168–192 (MTLQVLDLSNNRLSGSVPDNGSFSL). Residues asparagine 107 and asparagine 118 are each glycosylated (N-linked (GlcNAc...) asparagine). Leucine-rich repeat receptor-like protein kinase binding regions lie at residues 126–129 (DLYL) and 148–150 (FLR). Residues asparagine 153 and asparagine 187 are each glycosylated (N-linked (GlcNAc...) asparagine). Residues 174-197 (DLSNNRLSGSVPDNGSFSLFTPIS) form a leucine-rich repeat receptor-like protein kinase binding region. Cysteine 205 and cysteine 213 are oxidised to a cystine. Residues 242 to 262 (AIAGGVAAGAALLFAAPALAF) form a helical membrane-spanning segment. Topologically, residues 263-628 (AWWRRRKPQE…LHAMELSGPR (366 aa)) are cytoplasmic. At threonine 302 the chain carries Phosphothreonine. Residues 305–592 (FSNKNILGRG…GLAEKWDEWQ (288 aa)) form the Protein kinase domain. 311–319 (LGRGGFGKV) contributes to the ATP binding site. Threonine 328 bears the Phosphothreonine mark. Lysine 333 serves as a coordination point for ATP. A phosphoserine mark is found at serine 386 and serine 389. Catalysis depends on aspartate 432, which acts as the Proton acceptor. Residues threonine 462, threonine 465, threonine 466, and threonine 471 each carry the phosphothreonine modification. Tyrosine 479 is modified (phosphotyrosine). Residue serine 481 is modified to Phosphoserine. Threonine 482 is subject to Phosphothreonine. Serine 486 is modified (phosphoserine). Threonine 562 bears the Phosphothreonine mark. Serine 604 carries the phosphoserine modification. Threonine 616 bears the Phosphothreonine mark. Serine 625 is modified (phosphoserine).

Belongs to the protein kinase superfamily. Ser/Thr protein kinase family. Homo- and heterodimer. Component of the SERK1 signaling complex, composed of KAPP, CDC48A, GRF6 or GRF7, SERK1, SERK2, SERK3/BAK1 and BRI1. Bind to BRI1 in a brassinolide-dependent manner. Heterodimer with PSKR1. Interacts with the EF-Tu receptor EFR and FLS2 in a specific ligand-induced manner. Interacts with ERECTA in a EPF2-induced manner. Interacts with ERL1 in a EPF1-induced manner. Interacts with TMM. In the presence of the signal peptide RGF1, interacts with RGI3/RGFR1 and RGI4/RGFR2/SKM2. Binds to the peptide CLE44 in the presence of TDR. Autophosphorylated. Expressed in flowers, tapetum, developing microspores, all cells of the embryo sac, provascular strands and developing vascular bundles. Low expression in adult vascular tissue.

Its subcellular location is the cell membrane. It carries out the reaction L-seryl-[protein] + ATP = O-phospho-L-seryl-[protein] + ADP + H(+). The catalysed reaction is L-threonyl-[protein] + ATP = O-phospho-L-threonyl-[protein] + ADP + H(+). Its function is as follows. Serine/threonine-kinase involved in brassinosteroid-dependent and -independent signaling pathways. Acts redundantly with SERK1 as a control point for sporophytic development controlling male gametophyte production. Serves as coreceptor to small peptide (e.g. RGF1 and CLE44) signaling. Involved in the perception of phytosulfokine and subsequent signal transduction. This Arabidopsis thaliana (Mouse-ear cress) protein is Somatic embryogenesis receptor kinase 2.